The primary structure comprises 294 residues: Lipoyl synthase 1 (294 aa).

C38, C43, C49, C64, C68, C71, and S279 together coordinate [4Fe-4S] cluster. The Radical SAM core domain maps to 50–268; that stretch reads FAGGTATFLI…EEGQTRFGFL (219 aa).

The protein belongs to the radical SAM superfamily. Lipoyl synthase family. The cofactor is [4Fe-4S] cluster.

Its subcellular location is the cytoplasm. The catalysed reaction is [[Fe-S] cluster scaffold protein carrying a second [4Fe-4S](2+) cluster] + N(6)-octanoyl-L-lysyl-[protein] + 2 oxidized [2Fe-2S]-[ferredoxin] + 2 S-adenosyl-L-methionine + 4 H(+) = [[Fe-S] cluster scaffold protein] + N(6)-[(R)-dihydrolipoyl]-L-lysyl-[protein] + 4 Fe(3+) + 2 hydrogen sulfide + 2 5'-deoxyadenosine + 2 L-methionine + 2 reduced [2Fe-2S]-[ferredoxin]. Its pathway is protein modification; protein lipoylation via endogenous pathway; protein N(6)-(lipoyl)lysine from octanoyl-[acyl-carrier-protein]: step 2/2. Catalyzes the radical-mediated insertion of two sulfur atoms into the C-6 and C-8 positions of the octanoyl moiety bound to the lipoyl domains of lipoate-dependent enzymes, thereby converting the octanoylated domains into lipoylated derivatives. The protein is Lipoyl synthase 1 of Prochlorococcus marinus (strain SARG / CCMP1375 / SS120).